The sequence spans 614 residues: MNAPDKFASLLALTREPFPASTKSYLAGSQPGLRVPVRDIQLTNGEVVSVYDTSGPYTDPAVQIDVRKGLASVRGEWIAARGDTEGYEGRVRKALDDGQKAEDGDRLAQLRAEAAALQRQPLRARSGANVTQMHYAKKGIVTPEMEYVALRENGRREWMQQYMQDTAREQRLAGNPLGASIPKIITPEFVRDEVARGRAIIPANINHPEVEPMAIGRNFKVKINANIGNSAVTSSIEEEVEKLVWAIRWGADNVMDLSTGKNIHTTRDWIVRNSPVPIGTVPIYQALEKVGGIAEDLTWEIFRDTLIEQAEQGVDYFTIHAGVRLAYIQLTAARRTGIVSRGGSIMAKWCMAHHKESFLYTHFEDICDIMKAYDVSFSLGDGLRPGCASDANDEAQFAELHTLGELTQIAWKHDVQTMIEGPGHVPMHMIQANMTEQLKTCHEAPFYTLGPLTIDIAPGYDHIASAIGAAMIGWMGTAMLCYVTPKEHLGLPDRDDVKQGIIAYKIAAHAADVAKGHPGARARDDALSQARFDFRWQDQFNLGLDPDTAKEYHDETLPKDSAKVAHFCSMCGPKFCSMKITQEVREFAQQGLQSKAEEFNRTGGELYVPIHRAD.

Substrate contacts are provided by residues Asn-226, Met-255, Tyr-284, His-320, 340–342, 381–384, and Glu-420; these read SRG and DGLR. Residue His-424 coordinates Zn(2+). Tyr-447 serves as a coordination point for substrate. His-488 contacts Zn(2+). Residues Cys-568, Cys-571, and Cys-576 each contribute to the [4Fe-4S] cluster site.

This sequence belongs to the ThiC family. In terms of assembly, homodimer. [4Fe-4S] cluster is required as a cofactor.

The catalysed reaction is 5-amino-1-(5-phospho-beta-D-ribosyl)imidazole + S-adenosyl-L-methionine = 4-amino-2-methyl-5-(phosphooxymethyl)pyrimidine + CO + 5'-deoxyadenosine + formate + L-methionine + 3 H(+). Its pathway is cofactor biosynthesis; thiamine diphosphate biosynthesis. In terms of biological role, catalyzes the synthesis of the hydroxymethylpyrimidine phosphate (HMP-P) moiety of thiamine from aminoimidazole ribotide (AIR) in a radical S-adenosyl-L-methionine (SAM)-dependent reaction. The sequence is that of Phosphomethylpyrimidine synthase from Acidovorax sp. (strain JS42).